The following is a 301-amino-acid chain: Nucleotide-binding protein Rfer_1653 (301 aa).

15 to 22 provides a ligand contact to ATP; it reads GMSGSGKS. 64 to 67 lines the GTP pocket; the sequence is DVRT.

The protein belongs to the RapZ-like family.

Functionally, displays ATPase and GTPase activities. The sequence is that of Nucleotide-binding protein Rfer_1653 from Albidiferax ferrireducens (strain ATCC BAA-621 / DSM 15236 / T118) (Rhodoferax ferrireducens).